The primary structure comprises 233 residues: Antiholin-like protein LrgB (233 aa).

Transmembrane regions (helical) follow at residues 5-25 (LGIN…VIAT), 33-53 (GFFL…FLKL), 63-83 (IGGD…AIPL), 97-117 (IFGG…LVAI), 152-172 (LTSL…AKIV), and 212-232 (IAVV…APIL).

This sequence belongs to the CidB/LrgB family. LrgB subfamily.

Its subcellular location is the cell membrane. Inhibits the expression or activity of extracellular murein hydrolases by interacting, possibly with LrgA, with the holin-like proteins CidA and/or CidB. The LrgAB and CidAB proteins may affect the proton motive force of the membrane. May be involved in programmed cell death (PCD), possibly triggering PCD in response to antibiotics and environmental stresses. This Staphylococcus epidermidis (strain ATCC 35984 / DSM 28319 / BCRC 17069 / CCUG 31568 / BM 3577 / RP62A) protein is Antiholin-like protein LrgB.